The following is a 534-amino-acid chain: Probable glycine dehydrogenase (decarboxylating) subunit 2 (534 aa).

Lys-273 bears the N6-(pyridoxal phosphate)lysine mark.

It belongs to the GcvP family. C-terminal subunit subfamily. The glycine cleavage system is composed of four proteins: P, T, L and H. In this organism, the P 'protein' is a heterodimer of two subunits. Pyridoxal 5'-phosphate is required as a cofactor.

The catalysed reaction is N(6)-[(R)-lipoyl]-L-lysyl-[glycine-cleavage complex H protein] + glycine + H(+) = N(6)-[(R)-S(8)-aminomethyldihydrolipoyl]-L-lysyl-[glycine-cleavage complex H protein] + CO2. Its function is as follows. The glycine cleavage system catalyzes the degradation of glycine. The P protein binds the alpha-amino group of glycine through its pyridoxal phosphate cofactor; CO(2) is released and the remaining methylamine moiety is then transferred to the lipoamide cofactor of the H protein. This Bacillus cereus (strain ATCC 14579 / DSM 31 / CCUG 7414 / JCM 2152 / NBRC 15305 / NCIMB 9373 / NCTC 2599 / NRRL B-3711) protein is Probable glycine dehydrogenase (decarboxylating) subunit 2.